The sequence spans 161 residues: Putative sporulation sigma factor-processing peptidase (161 aa).

The active site involves D38.

The protein belongs to the peptidase U4 family.

Functionally, probably activates the RNA polymerase sigma-35 factor at the stage II of sporulation. This chain is Putative sporulation sigma factor-processing peptidase, found in Bacillus thuringiensis subsp. kurstaki.